Consider the following 675-residue polypeptide: Potassium-transporting ATPase ATP-binding subunit (675 aa).

4 consecutive transmembrane segments (helical) span residues 34-54, 65-85, 216-236, and 245-265; these read IMFVVEVGMILTLILICFPDI, LITIFIILLITILFANFSEAF, IALFTLLTTLTIIFLVVIVTL, and LILPIAMLIALTVCLIPTTIG. The active-site 4-aspartylphosphate intermediate is the aspartate 304. Residues aspartate 341, glutamate 345, 372-379, and lysine 390 contribute to the ATP site; that span reads FTAETRMS. Aspartate 513 and aspartate 517 together coordinate Mg(2+). Transmembrane regions (helical) follow at residues 569-591, 611-631, and 644-664; these read ALTTFSLANDVAKYFAILPALMM, AIISALIFNALIIVALIPIAM, and IFINNMLIYGLGGLIVPFLGI.

It belongs to the cation transport ATPase (P-type) (TC 3.A.3) family. Type IA subfamily. As to quaternary structure, the system is composed of three essential subunits: KdpA, KdpB and KdpC.

Its subcellular location is the cell membrane. The enzyme catalyses K(+)(out) + ATP + H2O = K(+)(in) + ADP + phosphate + H(+). Functionally, part of the high-affinity ATP-driven potassium transport (or Kdp) system, which catalyzes the hydrolysis of ATP coupled with the electrogenic transport of potassium into the cytoplasm. This subunit is responsible for energy coupling to the transport system and for the release of the potassium ions to the cytoplasm. This chain is Potassium-transporting ATPase ATP-binding subunit, found in Staphylococcus aureus (strain bovine RF122 / ET3-1).